Consider the following 198-residue polypeptide: Putative Do-like 15 protein (198 aa).

Residues 48–198 form a serine protease region; the sequence is KIFSFSREPN…VFENDSPSDK (151 aa). Active-site charge relay system residues include His86 and Ser175.

This sequence belongs to the peptidase S1B family.

This Arabidopsis thaliana (Mouse-ear cress) protein is Putative Do-like 15 protein (DEGP15).